The chain runs to 96 residues: Large ribosomal subunit protein bL28 (96 aa).

The protein belongs to the bacterial ribosomal protein bL28 family.

The chain is Large ribosomal subunit protein bL28 from Leptospira biflexa serovar Patoc (strain Patoc 1 / Ames).